A 284-amino-acid polypeptide reads, in one-letter code: RNase adapter protein RapZ (284 aa).

8–15 (GRSGSGKS) serves as a coordination point for ATP. 56–59 (DVRN) serves as a coordination point for GTP. The RNA-binding stretch occupies residues 266–284 (RSRGKNVQLRHRTLEKRKE).

It belongs to the RapZ-like family. RapZ subfamily. Homotrimer.

Its function is as follows. Modulates the synthesis of GlmS, by affecting the processing and stability of the regulatory small RNA GlmZ. When glucosamine-6-phosphate (GlcN6P) concentrations are high in the cell, RapZ binds GlmZ and targets it to cleavage by RNase E. Consequently, GlmZ is inactivated and unable to activate GlmS synthesis. Under low GlcN6P concentrations, RapZ is sequestered and inactivated by an other regulatory small RNA, GlmY, preventing GlmZ degradation and leading to synthesis of GlmS. The protein is RNase adapter protein RapZ of Hamiltonella defensa subsp. Acyrthosiphon pisum (strain 5AT).